Here is a 267-residue protein sequence, read N- to C-terminus: GTP cyclohydrolase MptA (267 aa).

Belongs to the GTP cyclohydrolase IV family. As to quaternary structure, homodimer. The cofactor is Fe(2+).

The enzyme catalyses GTP + H2O = 7,8-dihydroneopterin 2',3'-cyclic phosphate + formate + diphosphate + H(+). It participates in cofactor biosynthesis; 5,6,7,8-tetrahydromethanopterin biosynthesis. Its function is as follows. Converts GTP to 7,8-dihydro-D-neopterin 2',3'-cyclic phosphate, the first intermediate in the biosynthesis of coenzyme methanopterin. The protein is GTP cyclohydrolase MptA of Thermococcus kodakarensis (strain ATCC BAA-918 / JCM 12380 / KOD1) (Pyrococcus kodakaraensis (strain KOD1)).